The chain runs to 214 residues: Pyridoxine/pyridoxamine 5'-phosphate oxidase (214 aa).

Substrate is bound by residues 10–13 and Lys-68; that span reads RLNY. Residues 63–68, 78–79, Lys-85, and Gln-107 each bind FMN; these read RMVLLK and YT. Tyr-125, Arg-129, and Ser-133 together coordinate substrate. Residues 142–143 and Trp-187 contribute to the FMN site; that span reads QS. 193–195 serves as a coordination point for substrate; sequence RLH. FMN is bound at residue Arg-197.

It belongs to the pyridoxamine 5'-phosphate oxidase family. Homodimer. The cofactor is FMN.

It catalyses the reaction pyridoxamine 5'-phosphate + O2 + H2O = pyridoxal 5'-phosphate + H2O2 + NH4(+). It carries out the reaction pyridoxine 5'-phosphate + O2 = pyridoxal 5'-phosphate + H2O2. Its pathway is cofactor metabolism; pyridoxal 5'-phosphate salvage; pyridoxal 5'-phosphate from pyridoxamine 5'-phosphate: step 1/1. It functions in the pathway cofactor metabolism; pyridoxal 5'-phosphate salvage; pyridoxal 5'-phosphate from pyridoxine 5'-phosphate: step 1/1. Its function is as follows. Catalyzes the oxidation of either pyridoxine 5'-phosphate (PNP) or pyridoxamine 5'-phosphate (PMP) into pyridoxal 5'-phosphate (PLP). The protein is Pyridoxine/pyridoxamine 5'-phosphate oxidase of Synechocystis sp. (strain ATCC 27184 / PCC 6803 / Kazusa).